The chain runs to 190 residues: Peptidoglycan recognition protein 1 (190 aa).

The first 21 residues, 1–21, serve as a signal peptide directing secretion; that stretch reads MSRRYTPLAWVLLALLGLGAA. Residue glutamine 22 is modified to Pyrrolidone carboxylic acid. Cystine bridges form between cysteine 24/cysteine 148, cysteine 40/cysteine 85, and cysteine 61/cysteine 67. In terms of domain architecture, N-acetylmuramoyl-L-alanine amidase spans 46–174; that stretch reads QPVRYVVVSH…RDVQQTLSPG (129 aa).

Belongs to the N-acetylmuramoyl-L-alanine amidase 2 family. As to quaternary structure, homodimer; disulfide-linked. In terms of tissue distribution, synthesized only in bone marrow. The mature protein is stored in the cytoplasmic granules of eosinophils and neutrophils but is absent from monocytes, lymphocytes, or platelets.

It localises to the secreted. The protein resides in the cytoplasmic granule. In terms of biological role, innate immunity protein that plays several important functions in antimicrobial and antitumor defense systems. Acts as a pattern receptor that binds to murein peptidoglycans (PGN) of Gram-positive bacteria and thus provides bactericidal activity. Forms an equimolar complex with heat shock protein HSPA1A and induces programmed cell death through apoptosis and necroptosis in tumor cell lines by activating the TNFR1 receptor on the target cell membrane. In addition, acts in complex with the Ca(2+)-binding protein S100A4 as a chemoattractant able to induce lymphocyte movement. Mechanistically, this complex acts as a ligand of the chemotactic receptors CCR5 and CXCR3 which are present on the cells of the immune system. Also promotes the activation of lymphocytes that become able to kill virus-infected cells as well as tumor cells by modulating the spectrum of their target-cell specificity. Induction of cytotoxicity on monocyte surface requires interaction with TREM1 receptor. In Bos taurus (Bovine), this protein is Peptidoglycan recognition protein 1 (PGLYRP1).